The following is a 59-amino-acid chain: Single-pass membrane and coiled-coil domain-containing protein 4 (59 aa).

A disordered region spans residues 1–23; the sequence is MRQLKGKPKKETSKDKKERKQAM. The span at 9-22 shows a compositional bias: basic and acidic residues; the sequence is KKETSKDKKERKQA. Residues 9-31 adopt a coiled-coil conformation; the sequence is KKETSKDKKERKQAMQEARQQIT. Residues 32 to 52 traverse the membrane as a helical segment; it reads TVVLPTLAVVVLLIVVFVYVA.

The protein belongs to the SMCO4 family.

The protein localises to the membrane. The sequence is that of Single-pass membrane and coiled-coil domain-containing protein 4 (Smco4) from Mus musculus (Mouse).